A 417-amino-acid chain; its full sequence is Serine hydroxymethyltransferase (417 aa).

Residues L121 and 125–127 contribute to the (6S)-5,6,7,8-tetrahydrofolate site; that span reads GHL. Position 229 is an N6-(pyridoxal phosphate)lysine (K229). (6S)-5,6,7,8-tetrahydrofolate is bound at residue 355–357; that stretch reads SPF.

Belongs to the SHMT family. As to quaternary structure, homodimer. Requires pyridoxal 5'-phosphate as cofactor.

It localises to the cytoplasm. The catalysed reaction is (6R)-5,10-methylene-5,6,7,8-tetrahydrofolate + glycine + H2O = (6S)-5,6,7,8-tetrahydrofolate + L-serine. It functions in the pathway one-carbon metabolism; tetrahydrofolate interconversion. The protein operates within amino-acid biosynthesis; glycine biosynthesis; glycine from L-serine: step 1/1. Its function is as follows. Catalyzes the reversible interconversion of serine and glycine with tetrahydrofolate (THF) serving as the one-carbon carrier. This reaction serves as the major source of one-carbon groups required for the biosynthesis of purines, thymidylate, methionine, and other important biomolecules. Also exhibits THF-independent aldolase activity toward beta-hydroxyamino acids, producing glycine and aldehydes, via a retro-aldol mechanism. The sequence is that of Serine hydroxymethyltransferase from Buchnera aphidicola subsp. Baizongia pistaciae (strain Bp).